The sequence spans 235 residues: Uridylate kinase (235 aa).

8–11 is an ATP binding site; that stretch reads KLSG. Glycine 49 contacts UMP. Glycine 50 and arginine 54 together coordinate ATP. 131 to 138 is a binding site for UMP; sequence TGNPYFST. 3 residues coordinate ATP: asparagine 159, tyrosine 165, and aspartate 168.

Belongs to the UMP kinase family. As to quaternary structure, homohexamer.

It localises to the cytoplasm. It catalyses the reaction UMP + ATP = UDP + ADP. It participates in pyrimidine metabolism; CTP biosynthesis via de novo pathway; UDP from UMP (UMPK route): step 1/1. Inhibited by UTP. Catalyzes the reversible phosphorylation of UMP to UDP. The polypeptide is Uridylate kinase (Mycoplasma pneumoniae (strain ATCC 29342 / M129 / Subtype 1) (Mycoplasmoides pneumoniae)).